A 109-amino-acid polypeptide reads, in one-letter code: Nucleoid-associated protein SO_2014 (109 aa).

Belongs to the YbaB/EbfC family. In terms of assembly, homodimer.

It is found in the cytoplasm. It localises to the nucleoid. Its function is as follows. Binds to DNA and alters its conformation. May be involved in regulation of gene expression, nucleoid organization and DNA protection. The polypeptide is Nucleoid-associated protein SO_2014 (Shewanella oneidensis (strain ATCC 700550 / JCM 31522 / CIP 106686 / LMG 19005 / NCIMB 14063 / MR-1)).